The chain runs to 452 residues: Keratin, type II cytoskeletal 80 (452 aa).

A head region spans residues 1–82; sequence MAYRSCVVGF…DPAVQQQKNQ (82 aa). Residue Ser45 is modified to Phosphoserine. A coil 1A region spans residues 82–118; that stretch reads QEKEEMKVLNDKFASLIGKVQALEQRNQLLETRWGFL. The IF rod domain occupies 83–394; it reads EKEEMKVLND…KLMEGEESRM (312 aa). Residues 119–135 are linker 1; that stretch reads QGQGSATFDLSHHYETF. A coil 1B region spans residues 136-227; that stretch reads QGRLQEELRK…TVYEQELKDL (92 aa). The tract at residues 228 to 251 is linker 12; it reads TAQVKDVSVTVGLDSRCHIDLSGI. The segment at 252 to 390 is coil 2; the sequence is VEEVKAQYDA…ATYHKLMEGE (139 aa). The tail stretch occupies residues 391–452; that stretch reads ESRMDLPSTT…YLSQESEASE (62 aa). 2 stretches are compositionally biased toward polar residues: residues 411–421 and 443–452; these read TTASKSGLSKT and YLSQESEASE. The interval 411–452 is disordered; it reads TTASKSGLSKTPSRKKKNRGGPVIKITEMSEKYLSQESEASE.

It belongs to the intermediate filament family. In terms of assembly, heterotetramer of two type I and two type II keratins.

The chain is Keratin, type II cytoskeletal 80 (Krt80) from Rattus norvegicus (Rat).